We begin with the raw amino-acid sequence, 122 residues long: Large ribosomal subunit protein uL14 (122 aa).

It belongs to the universal ribosomal protein uL14 family. Part of the 50S ribosomal subunit. Forms a cluster with proteins L3 and L19. In the 70S ribosome, L14 and L19 interact and together make contacts with the 16S rRNA in bridges B5 and B8.

Functionally, binds to 23S rRNA. Forms part of two intersubunit bridges in the 70S ribosome. The sequence is that of Large ribosomal subunit protein uL14 from Hahella chejuensis (strain KCTC 2396).